Consider the following 430-residue polypeptide: Serine--tRNA ligase (430 aa).

Residue threonine 237–glutamate 239 coordinates L-serine. Arginine 268–glutamate 270 lines the ATP pocket. Residue glutamate 291 coordinates L-serine. Glutamate 355–serine 358 is an ATP binding site. Serine 391 is a binding site for L-serine.

The protein belongs to the class-II aminoacyl-tRNA synthetase family. Type-1 seryl-tRNA synthetase subfamily. As to quaternary structure, homodimer. The tRNA molecule binds across the dimer.

The protein resides in the cytoplasm. The enzyme catalyses tRNA(Ser) + L-serine + ATP = L-seryl-tRNA(Ser) + AMP + diphosphate + H(+). It carries out the reaction tRNA(Sec) + L-serine + ATP = L-seryl-tRNA(Sec) + AMP + diphosphate + H(+). It functions in the pathway aminoacyl-tRNA biosynthesis; selenocysteinyl-tRNA(Sec) biosynthesis; L-seryl-tRNA(Sec) from L-serine and tRNA(Sec): step 1/1. In terms of biological role, catalyzes the attachment of serine to tRNA(Ser). Is also able to aminoacylate tRNA(Sec) with serine, to form the misacylated tRNA L-seryl-tRNA(Sec), which will be further converted into selenocysteinyl-tRNA(Sec). In Salmonella enteritidis PT4 (strain P125109), this protein is Serine--tRNA ligase.